Consider the following 1068-residue polypeptide: Tricorn protease homolog (1068 aa).

Residues 61-326 (MKAYYMYPDI…DSLTKLDINL (266 aa)) form a six-bladed beta propeller region. Residues 338-686 (VNVMEYMNEA…RKGGVIDLSR (349 aa)) are seven-bladed beta propeller. Residues 692–762 (EPEKEWRQML…RTSHSYETAY (71 aa)) are C-1. Catalysis depends on H756, which acts as the Charge relay system. Positions 771–864 (SVGGLGAEFE…RVTVKVLKDE (94 aa)) are PDZ-like. The tract at residues 865–1068 (RFLIYRYWVE…TAIELALKQL (204 aa)) is C-2. G927 lines the substrate pocket. Catalysis depends on S974, which acts as the Nucleophile. E1032 serves as the catalytic Charge relay system.

This sequence belongs to the peptidase S41B family.

It is found in the cytoplasm. Degrades oligopeptides in a sequential manner. The polypeptide is Tricorn protease homolog (tri) (Saccharolobus solfataricus (strain ATCC 35092 / DSM 1617 / JCM 11322 / P2) (Sulfolobus solfataricus)).